Here is a 490-residue protein sequence, read N- to C-terminus: Aspartyl/glutamyl-tRNA(Asn/Gln) amidotransferase subunit B (490 aa).

Belongs to the GatB/GatE family. GatB subfamily. As to quaternary structure, heterotrimer of A, B and C subunits.

It carries out the reaction L-glutamyl-tRNA(Gln) + L-glutamine + ATP + H2O = L-glutaminyl-tRNA(Gln) + L-glutamate + ADP + phosphate + H(+). It catalyses the reaction L-aspartyl-tRNA(Asn) + L-glutamine + ATP + H2O = L-asparaginyl-tRNA(Asn) + L-glutamate + ADP + phosphate + 2 H(+). Functionally, allows the formation of correctly charged Asn-tRNA(Asn) or Gln-tRNA(Gln) through the transamidation of misacylated Asp-tRNA(Asn) or Glu-tRNA(Gln) in organisms which lack either or both of asparaginyl-tRNA or glutaminyl-tRNA synthetases. The reaction takes place in the presence of glutamine and ATP through an activated phospho-Asp-tRNA(Asn) or phospho-Glu-tRNA(Gln). This Burkholderia mallei (strain NCTC 10247) protein is Aspartyl/glutamyl-tRNA(Asn/Gln) amidotransferase subunit B.